We begin with the raw amino-acid sequence, 339 residues long: uncharacterized protein (339 aa).

Zn(2+) contacts are provided by His17, His19, His197, and Asp278. Asp279 contributes to the substrate binding site.

Belongs to the metallo-dependent hydrolases superfamily. Adenosine and AMP deaminases family. Adenine deaminase type 2 subfamily. Zn(2+) is required as a cofactor.

It is found in the cytoplasm. The protein resides in the nucleus. This is an uncharacterized protein from Schizosaccharomyces pombe (strain 972 / ATCC 24843) (Fission yeast).